An 839-amino-acid polypeptide reads, in one-letter code: Taste receptor type 1 member 2 (839 aa).

Residues 1–19 (MGPRAKTISSLFFLLWVLA) form the signal peptide. The Extracellular segment spans residues 20-566 (EPAENSDFYL…VFLEWHEAPT (547 aa)). N-linked (GlcNAc...) asparagine glycans are attached at residues Asn84, Asn248, Asn292, Asn312, Asn368, Asn428, Asn487, and Asn527. A helical membrane pass occupies residues 567 to 587 (IAVALLAALGFLSTLAILVIF). At 588–602 (WRHFQTPIVRSAGGP) the chain is on the cytoplasmic side. Residues 603 to 623 (MCFLMLTLLLVAYMVVPVYVG) traverse the membrane as a helical segment. Over 624–635 (PPKVSTCLCRQA) the chain is Extracellular. A helical membrane pass occupies residues 636–656 (LFPLCFTICISCIAVRSFQIV). The Cytoplasmic portion of the chain corresponds to 657 to 681 (CAFKMASRFPRAYSYWVRYQGPYVS). The helical transmembrane segment at 682-702 (MAFITVLKMVIVVIGMLATGL) threads the bilayer. Topologically, residues 703-727 (SPTTRTDPDDPKITIVSCNPNYRNS) are extracellular. Residues 728 to 748 (LLFNTSLDLLLSVVGFSFAYM) traverse the membrane as a helical segment. At 749–760 (GKELPTNYNEAK) the chain is on the cytoplasmic side. The helical transmembrane segment at 761–781 (FITLSMTFYFTSSVSLCTFMS) threads the bilayer. At 782–784 (AYS) the chain is on the extracellular side. Residues 785 to 805 (GVLVTIVDLLVTVLNLLAISL) form a helical membrane-spanning segment. Topologically, residues 806–839 (GYFGPKCYMILFYPERNTPAYFNSMIQGYTMRRD) are cytoplasmic.

It belongs to the G-protein coupled receptor 3 family. TAS1R subfamily. As to quaternary structure, forms heterodimers with TAS1R3.

The protein resides in the cell membrane. Functionally, putative taste receptor. TAS1R2/TAS1R3 recognizes diverse natural and synthetic sweeteners. This is Taste receptor type 1 member 2 (TAS1R2) from Homo sapiens (Human).